A 358-amino-acid polypeptide reads, in one-letter code: Chondroadherin (358 aa).

Residues 1-20 form the signal peptide; sequence MARALLFSLVFLAILLPALA. The region spanning 21–50 is the LRRNT domain; that stretch reads ACPQNCHCHGDLQHVICDKVGLQKIPKVSE. A disulfide bridge connects residues C22 and C37. LRR repeat units lie at residues 51–72, 75–96, 99–120, 123–144, 147–168, 171–192, 195–216, 219–240, 244–265, and 268–289; these read TTKLLNLQRNNFPVLAANSFRT, NLVSLHLQHCNIREVAAGAFRG, QLIYLYLSHNDIRVLRAGAFDD, ELTYLYLDHNKVSELPRGLLSP, NLFILQLNNNKIRELRAGAFQG, DLRWLYLSENALSSLQPGSLDD, NLAKFHLDKNQLSSYPSAALSK, VVEELKLSHNPLKSIPDNAFQS, YLETLWLDNTNLEKFSDAAFSG, and TLKHVHLDNNRLNQLPSSFPFD. S143 carries an O-linked (GalNAc...) serine glycan. One can recognise an LRRCT domain in the interval 299–347; sequence NPWKCTCQLRGLRRWLEAKASRPDATCSSPAKFKGQRIRDTDALRSCKS. 2 disulfides stabilise this stretch: C303-C345 and C305-C325. The interval 322–358 is disordered; that stretch reads DATCSSPAKFKGQRIRDTDALRSCKSPTKRSKKAGRH. Over residues 348 to 358 the composition is skewed to basic residues; it reads PTKRSKKAGRH.

This sequence belongs to the small leucine-rich proteoglycan (SLRP) family. SLRP class IV subfamily. Mostly monomeric. Interacts with collagen type II. In terms of tissue distribution, cartilage.

Its subcellular location is the secreted. The protein localises to the extracellular space. It localises to the extracellular matrix. Promotes attachment of chondrocytes, fibroblasts, and osteoblasts. This binding is mediated (at least for chondrocytes and fibroblasts) by the integrin alpha(2)beta(1). May play an important role in the regulation of chondrocyte growth and proliferation. The protein is Chondroadherin (Chad) of Mus musculus (Mouse).